The sequence spans 795 residues: Forkhead box protein P4 (795 aa).

Polar residues predominate over residues 1 to 25 (MMVESASETIRSAPSGQNGVGSLSA). Residues 1-62 (MMVESASETI…SGGADSNGEM (62 aa)) form a disordered region. Residues 36-45 (AGTAPAAGRD) are compositionally biased toward low complexity. S58 and S92 each carry phosphoserine. A Glycyl lysine isopeptide (Lys-Gly) (interchain with G-Cter in SUMO2) cross-link involves residue K181. 2 disordered regions span residues 233–252 (PQLWKGEGAPGQPAEDSGRQ) and 265–310 (TSFA…PLYG). A compositionally biased stretch (basic and acidic residues) spans 292–303 (SRRDSSSHEETP). Residues 312 to 337 (GECKWPGCETLCEDLGQFIKHLNTEH) form a C2H2-type zinc finger. The tract at residues 354 to 375 (VQQLEIQLAKESERLQAMMAHL) is leucine-zipper. The segment at 379 to 437 (PSEPKPFSQPVTVSADPFPDGLVHPPTSAAAPVTPLRPPGLGSASLHSGGPARRRSNDK) is disordered. A Glycyl lysine isopeptide (Lys-Gly) (interchain with G-Cter in SUMO2) cross-link involves residue K383. Positions 459-549 (RPPFTYASLI…PPKMTGSPTL (91 aa)) form a DNA-binding region, fork-head. S546 is modified (phosphoserine). The disordered stretch occupies residues 589-671 (ASSLLPLSQE…LEEDLGGEDM (83 aa)). The segment covering 609–627 (SNGSSSPPRLSPPQYSHQI) has biased composition (polar residues). Residues 628–642 (QVKEEPAEAEEDRRP) show a composition bias toward basic and acidic residues.

In terms of assembly, forms homodimers and heterodimers with FOXP1 and FOXP2. Dimerization is required for DNA-binding. As to expression, expressed in the adult heart, brain, spleen lung, liver, kidney and testes.

The protein resides in the nucleus. Functionally, transcriptional repressor that represses lung-specific expression. In Mus musculus (Mouse), this protein is Forkhead box protein P4.